We begin with the raw amino-acid sequence, 363 residues long: Holliday junction branch migration complex subunit RuvB (363 aa).

Residues 1-32 (MSDVERTEFEIPGGIPPRRNGGQGRAADTNVD) are disordered. The segment at 27–207 (ADTNVDANLK…FGFTAQMEFY (181 aa)) is large ATPase domain (RuvB-L). Residues Leu-46, Arg-47, Gly-88, Lys-91, Thr-92, Thr-93, 154 to 156 (EDF), Arg-197, Tyr-207, and Arg-244 each bind ATP. Thr-92 contributes to the Mg(2+) binding site. The segment at 208 to 278 (DVPDLTKVVK…AANAALIVFD (71 aa)) is small ATPAse domain (RuvB-S). The tract at residues 281–363 (EVGLDRLDRA…EPPEGTIGDY (83 aa)) is head domain (RuvB-H). Arg-336 and Arg-341 together coordinate DNA.

This sequence belongs to the RuvB family. Homohexamer. Forms an RuvA(8)-RuvB(12)-Holliday junction (HJ) complex. HJ DNA is sandwiched between 2 RuvA tetramers; dsDNA enters through RuvA and exits via RuvB. An RuvB hexamer assembles on each DNA strand where it exits the tetramer. Each RuvB hexamer is contacted by two RuvA subunits (via domain III) on 2 adjacent RuvB subunits; this complex drives branch migration. In the full resolvosome a probable DNA-RuvA(4)-RuvB(12)-RuvC(2) complex forms which resolves the HJ.

It is found in the cytoplasm. The enzyme catalyses ATP + H2O = ADP + phosphate + H(+). In terms of biological role, the RuvA-RuvB-RuvC complex processes Holliday junction (HJ) DNA during genetic recombination and DNA repair, while the RuvA-RuvB complex plays an important role in the rescue of blocked DNA replication forks via replication fork reversal (RFR). RuvA specifically binds to HJ cruciform DNA, conferring on it an open structure. The RuvB hexamer acts as an ATP-dependent pump, pulling dsDNA into and through the RuvAB complex. RuvB forms 2 homohexamers on either side of HJ DNA bound by 1 or 2 RuvA tetramers; 4 subunits per hexamer contact DNA at a time. Coordinated motions by a converter formed by DNA-disengaged RuvB subunits stimulates ATP hydrolysis and nucleotide exchange. Immobilization of the converter enables RuvB to convert the ATP-contained energy into a lever motion, pulling 2 nucleotides of DNA out of the RuvA tetramer per ATP hydrolyzed, thus driving DNA branch migration. The RuvB motors rotate together with the DNA substrate, which together with the progressing nucleotide cycle form the mechanistic basis for DNA recombination by continuous HJ branch migration. Branch migration allows RuvC to scan DNA until it finds its consensus sequence, where it cleaves and resolves cruciform DNA. This chain is Holliday junction branch migration complex subunit RuvB, found in Corynebacterium glutamicum (strain R).